Reading from the N-terminus, the 234-residue chain is Phosphoglycolate phosphatase (234 aa).

Residue Asp8 is the Nucleophile of the active site. Residues Asp8 and Asp10 each coordinate Mg(2+). Residue Lys155 participates in substrate binding. Positions 178 and 182 each coordinate Mg(2+).

This sequence belongs to the archaeal SPP-like hydrolase family. The cofactor is Mg(2+).

The catalysed reaction is 2-phosphoglycolate + H2O = glycolate + phosphate. In terms of biological role, catalyzes the dephosphorylation of 2-phosphoglycolate. The protein is Phosphoglycolate phosphatase of Thermococcus sibiricus (strain DSM 12597 / MM 739).